The chain runs to 728 residues: MKRGSQGEAGSPQTEEPEPLFSEEDRSLRDGNALDESDSEESQYSGLEDSGTDRSDDEEDHWSEEEENPGKSPKEIIKVPNRSSKSPADSAADEEDRPNEIKEYENDSSDEEDIRNTVGNIPMEWYKDLPHIGYDLDGRKIFKPLRSKDQLEEFLDKMENPDYWRTIHDKKTGQDIKLTDEQVDLVERLQKGQFGDINYDPYQPAIDFFTHETMIHPVTNRPADKRSFIPSLIEKEKVSKLVHAIKMGWIQPRKPREDTATYYDLWAKEDPNSILGRHKMHVPAPKLPLPGHEQSYNPPPEYLMSEEERLSWEQQDPEDRKLPFLPQRFNCLRAVPGYARFIHERFERCLDLYLCPRQRKMRVNVDPEDLIPKLPKPRDLQPFPTIQSLIYKGHKDLVRCISVSPSGQWLVSGSDDCSVRFWEVSTGRCMKSVVLEGAVKSISWNPNPGLVLVAACVDRSVVLINPGLGDRLLCSATDQHISGYQPPEEEVQQPVTWEEVEGAQYSNGLRLCIKHQKEVKQVTFHARGDYFAVVLPDNGNSQVLIHQLSRRRSQNPFRKNKGQVQKVLFHPTRPFFFVATQRYVRVYNLLKQELTKKLLTNCKWVSSIAVHPAGDNLICGSYDSKLAWFDMDLSTKPYKVLRHHKKALRAVSFHKSYPLFASGSDDGSVIVCHGMVYNDLLQNPLIVPVKVLRGHAIHRDLGVLDVTFHPTQPWVFSSGADATIRLFT.

A disordered region spans residues 1–114 (MKRGSQGEAG…ENDSSDEEDI (114 aa)). Acidic residues predominate over residues 55 to 67 (SDDEEDHWSEEEE). Basic and acidic residues predominate over residues 68 to 77 (NPGKSPKEII). 7 WD repeats span residues 393–432 (GHKD…CMKS), 434–474 (VLEG…RLLC), 514–556 (KHQK…SQNP), 559–597 (KNKG…LTKK), 600–639 (TNCK…KPYK), 643–682 (HHKK…DLLQ), and 698–728 (HRDL…RLFT).

The protein belongs to the WD repeat BOP1/ERB1 family. As to quaternary structure, component of the PeBoW complex, composed of bop1, pes1 and wdr12. The complex is held together by bop1, which interacts with pes1 via its N-terminal domain and with wdr12 via a high-affinity interaction between the seven-bladed beta-propeller domains of the 2 proteins. The PeBoW complex associates with the 66S pre-ribosome.

It is found in the nucleus. It localises to the nucleolus. Its subcellular location is the nucleoplasm. In terms of biological role, component of the PeBoW complex, which is required for maturation of 28S and 5.8S ribosomal RNAs and formation of the 60S ribosome. This Xenopus laevis (African clawed frog) protein is Ribosome biogenesis protein bop1-A (bop1-a).